The chain runs to 141 residues: Galactose-6-phosphate isomerase subunit LacA (141 aa).

It belongs to the LacAB/RpiB family. In terms of assembly, heteromultimeric protein consisting of LacA and LacB.

It catalyses the reaction aldehydo-D-galactose 6-phosphate = keto-D-tagatose 6-phosphate. It participates in carbohydrate metabolism; D-galactose 6-phosphate degradation; D-tagatose 6-phosphate from D-galactose 6-phosphate: step 1/1. In Streptococcus pneumoniae serotype 2 (strain D39 / NCTC 7466), this protein is Galactose-6-phosphate isomerase subunit LacA.